The following is a 278-amino-acid chain: Shikimate dehydrogenase (NADP(+)) (278 aa).

Residues 18 to 20 (SRS) and Thr-65 contribute to the shikimate site. The active-site Proton acceptor is the Lys-69. Glu-80 is a binding site for NADP(+). Residues Asn-89 and Asp-104 each coordinate shikimate. NADP(+)-binding positions include 129–133 (GAGGS) and Leu-218. A shikimate-binding site is contributed by Tyr-220. Gly-241 is a binding site for NADP(+).

It belongs to the shikimate dehydrogenase family. In terms of assembly, homodimer.

It carries out the reaction shikimate + NADP(+) = 3-dehydroshikimate + NADPH + H(+). The protein operates within metabolic intermediate biosynthesis; chorismate biosynthesis; chorismate from D-erythrose 4-phosphate and phosphoenolpyruvate: step 4/7. Functionally, involved in the biosynthesis of the chorismate, which leads to the biosynthesis of aromatic amino acids. Catalyzes the reversible NADPH linked reduction of 3-dehydroshikimate (DHSA) to yield shikimate (SA). The protein is Shikimate dehydrogenase (NADP(+)) of Rhodopseudomonas palustris (strain ATCC BAA-98 / CGA009).